The sequence spans 462 residues: Glycine--tRNA ligase (462 aa).

2 residues coordinate substrate: Arg-98 and Glu-174. ATP-binding positions include 206–208 (RNE), 216–221 (FRTREF), 290–291 (EL), and 334–337 (GADR). Position 221 to 225 (221 to 225 (FEQME)) interacts with substrate. Residue 330–334 (EPSLG) participates in substrate binding.

This sequence belongs to the class-II aminoacyl-tRNA synthetase family. In terms of assembly, homodimer.

It is found in the cytoplasm. It catalyses the reaction tRNA(Gly) + glycine + ATP = glycyl-tRNA(Gly) + AMP + diphosphate. Functionally, catalyzes the attachment of glycine to tRNA(Gly). The chain is Glycine--tRNA ligase from Lachnospira eligens (strain ATCC 27750 / DSM 3376 / VPI C15-48 / C15-B4) (Eubacterium eligens).